We begin with the raw amino-acid sequence, 368 residues long: N-succinylamino acid racemase (368 aa).

2-succinylbenzoate is bound by residues Ser135 and Lys161–Lys163. Lys163 (proton donor) is an active-site residue. A Mg(2+)-binding site is contributed by Asp189. Residue Asn191 coordinates 2-succinylbenzoate. Mg(2+) contacts are provided by Glu214 and Asp239. The active-site Proton acceptor is Lys263. A 2-succinylbenzoate-binding site is contributed by Ile293.

This sequence belongs to the mandelate racemase/muconate lactonizing enzyme family. MenC type 2 subfamily. In terms of assembly, homooctamer. Requires a divalent metal cation as cofactor.

The catalysed reaction is N-acetyl-D-methionine = N-acetyl-L-methionine. It carries out the reaction (1R,6R)-6-hydroxy-2-succinyl-cyclohexa-2,4-diene-1-carboxylate = 2-succinylbenzoate + H2O. With respect to regulation, inhibited by EDTA and sulfhydryl reagents such as p-chloromercuribenzoic acid. Both OSBS and NAAAR activities are inhibited competitively by salicylhydroxamate. Its function is as follows. Acts as a N-succinylamino acid racemase (NSAR) that catalyzes the racemization of N-succinyl-phenylglycine and N-succinyl-methionine. Can catalyze the racemization of a broad range of N-acylamino acids, including N-acetyl-D/L-methionine, N-propionyl-D/L-methionine, N-butyryl-D/L-methionine and N-chloroacetyl-L-valine. Also converts 2-succinyl-6-hydroxy-2,4-cyclohexadiene-1-carboxylate (SHCHC) to 2-succinylbenzoate (OSB). Catalyzes both N-succinylamino acid racemization and OSB synthesis at equivalent rates. NSAR is probably the biological function of this enzyme. The chain is N-succinylamino acid racemase from Amycolatopsis sp.